Consider the following 324-residue polypeptide: Cysteine-rich repeat secretory protein 9 (324 aa).

An N-terminal signal peptide occupies residues 1-27; the sequence is MARIIITLTIPLFYFFFFSLLSHQTMS. Gnk2-homologous domains lie at 29–132 and 138–248; these read PDHI…NVSF and IVPS…TSVL. The segment at 251 to 286 is disordered; sequence PPPSPSAPPPRSPPPKSSPPSSLPQTPSPPLVFTPP.

Belongs to the cysteine-rich repeat secretory protein family.

It is found in the secreted. In Arabidopsis thaliana (Mouse-ear cress), this protein is Cysteine-rich repeat secretory protein 9 (CRRSP9).